A 778-amino-acid chain; its full sequence is Probable protein kinase DDB_G0291133 (778 aa).

The interval 129-162 is disordered; it reads LSINNNNNNNNNNGGYKIPSSVNKNSNNYNSNSN. The Protein kinase domain occupies 177 to 462; sequence FDVVCKLGSG…LDQILLNENI (286 aa). ATP is bound by residues 183-191 and lysine 206; that span reads LGSGSFSDV. Aspartate 303 acts as the Proton acceptor in catalysis. The Mg(2+) site is built by asparagine 308 and aspartate 321. 3 disordered regions span residues 478-509, 562-697, and 757-778; these read NIEN…DDNN, HFVR…GFYG, and SHPQ…QETN. The span at 578 to 590 shows a compositional bias: acidic residues; the sequence is SDEEEDDDDDDDS. Residues 599-651 show a composition bias toward low complexity; the sequence is SLNNLNNSSSNIGISESNSNNSFSSILEENNESSSSSPLPSLSFSRRLSTSSL. Polar residues predominate over residues 652-670; that stretch reads VTTISPKPNFNTSGNKLFS. Positions 671-693 are enriched in low complexity; that stretch reads NENNNSNNNNNNNNNNQNNNNNN. Residues 757–766 are compositionally biased toward basic and acidic residues; the sequence is SHPQESDKMS.

Belongs to the protein kinase superfamily. Ser/Thr protein kinase family. WEE1 subfamily.

The catalysed reaction is L-seryl-[protein] + ATP = O-phospho-L-seryl-[protein] + ADP + H(+). It carries out the reaction L-threonyl-[protein] + ATP = O-phospho-L-threonyl-[protein] + ADP + H(+). The protein is Probable protein kinase DDB_G0291133 of Dictyostelium discoideum (Social amoeba).